Reading from the N-terminus, the 141-residue chain is Small ribosomal subunit protein bS18c (141 aa).

Disordered stretches follow at residues 14–55 and 120–141; these read EFIA…IKPG and IKRRESTARKKRKKGFRKRPKK. A compositionally biased stretch (pro residues) spans 24 to 34; that stretch reads PKAPLQPPLPP. Residues 35–51 show a composition bias toward basic residues; that stretch reads SKRKGKPPKSPRRRSSR.

Belongs to the bacterial ribosomal protein bS18 family. As to quaternary structure, part of the 30S ribosomal subunit.

It is found in the plastid. It localises to the chloroplast. The polypeptide is Small ribosomal subunit protein bS18c (Pelargonium hortorum (Common geranium)).